Here is a 62-residue protein sequence, read N- to C-terminus: Beta-defensin 10 (62 aa).

The signal sequence occupies residues 1-22 (MRLHHLLLLLLLVVLSSGSGFT). Pyrrolidone carboxylic acid is present on glutamine 23. 3 disulfide bridges follow: cysteine 31-cysteine 60, cysteine 38-cysteine 53, and cysteine 43-cysteine 61.

The protein belongs to the beta-defensin family. As to expression, neutrophilic granules.

The protein resides in the secreted. In terms of biological role, has bactericidal activity. Active against E.coli ML35 and S.aureus 502A. This is Beta-defensin 10 (DEFB10) from Bos taurus (Bovine).